Reading from the N-terminus, the 267-residue chain is 2-keto-3-deoxy-L-rhamnonate aldolase (267 aa).

Catalysis depends on histidine 49, which acts as the Proton acceptor. Residue glutamine 151 coordinates substrate. Glutamate 153 contacts Mg(2+). Alanine 178 and aspartate 179 together coordinate substrate. Aspartate 179 is a Mg(2+) binding site.

The protein belongs to the HpcH/HpaI aldolase family. KDR aldolase subfamily. In terms of assembly, homohexamer. Mg(2+) serves as cofactor.

It catalyses the reaction 2-dehydro-3-deoxy-L-rhamnonate = (S)-lactaldehyde + pyruvate. Functionally, catalyzes the reversible retro-aldol cleavage of 2-keto-3-deoxy-L-rhamnonate (KDR) to pyruvate and lactaldehyde. In Salmonella agona (strain SL483), this protein is 2-keto-3-deoxy-L-rhamnonate aldolase.